A 275-amino-acid chain; its full sequence is NH(3)-dependent NAD(+) synthetase (275 aa).

Residue 50-57 (GISGGVDS) participates in ATP binding. Position 56 (Asp-56) interacts with Mg(2+). Arg-147 provides a ligand contact to deamido-NAD(+). Residue Thr-167 coordinates ATP. Residue Glu-172 coordinates Mg(2+). Deamido-NAD(+)-binding residues include Lys-180 and Asp-187. ATP-binding residues include Lys-196 and Thr-218. Residue 267–268 (HK) coordinates deamido-NAD(+).

Belongs to the NAD synthetase family. As to quaternary structure, homodimer.

The enzyme catalyses deamido-NAD(+) + NH4(+) + ATP = AMP + diphosphate + NAD(+) + H(+). It functions in the pathway cofactor biosynthesis; NAD(+) biosynthesis; NAD(+) from deamido-NAD(+) (ammonia route): step 1/1. Catalyzes the ATP-dependent amidation of deamido-NAD to form NAD. Uses ammonia as a nitrogen source. This chain is NH(3)-dependent NAD(+) synthetase, found in Pseudomonas entomophila (strain L48).